Here is a 159-residue protein sequence, read N- to C-terminus: Immunoglobulin J chain (159 aa).

Residues Met1–Thr21 form the signal peptide. Intrachain disulfides connect Cys34/Cys123, Cys93/Cys113, and Cys131/Cys156. Asn70 carries an N-linked (GlcNAc...) (complex) asparagine glycan.

Part of the secretory IgA (sIgA) complex that consists of two, four or five IgA monomers, and two additional non-Ig polypeptides, namely the JCHAIN and the secretory component (the proteolytic product of PIGR). Part of the secretory IgM (sIgM) complex that consist of five IgM monomers, and two additional non-Ig polypeptides, namely the JCHAIN and the secretory component (the proteolytic product of PIGR). JCHAIN-containing IgM interacts (via CH4 domain) with FCRM (via Ig-like domain).

Its subcellular location is the secreted. In terms of biological role, serves to link two monomer units of either IgM or IgA. In the case of IgM, the J chain-joined dimer is a nucleating unit for the IgM pentamer, and in the case of IgA it induces dimers and/or larger polymers. It also helps to bind these immunoglobulins to secretory component. The protein is Immunoglobulin J chain of Mus musculus (Mouse).